Here is an 80-residue protein sequence, read N- to C-terminus: Biotin synthase auxiliary protein (80 aa).

It belongs to the BsaP family. The cofactor is iron-sulfur cluster.

Required for the activity of the biotin synthase BioB. The chain is Biotin synthase auxiliary protein from Mycobacterium leprae (strain TN).